The following is a 473-amino-acid chain: Cysteine--tRNA ligase (473 aa).

Cys-30 contributes to the Zn(2+) binding site. Positions Met-32 to His-42 match the 'HIGH' region motif. Residues Cys-213, His-238, and Glu-242 each contribute to the Zn(2+) site. The short motif at Lys-270–Ser-274 is the 'KMSKS' region element. Lys-273 is an ATP binding site.

The protein belongs to the class-I aminoacyl-tRNA synthetase family. In terms of assembly, monomer. Zn(2+) is required as a cofactor.

It localises to the cytoplasm. The enzyme catalyses tRNA(Cys) + L-cysteine + ATP = L-cysteinyl-tRNA(Cys) + AMP + diphosphate. The protein is Cysteine--tRNA ligase of Acinetobacter baylyi (strain ATCC 33305 / BD413 / ADP1).